The chain runs to 327 residues: Malate dehydrogenase (327 aa).

12–18 contacts NAD(+); that stretch reads GAAGQIG. The substrate site is built by Arg-93 and Arg-99. NAD(+) contacts are provided by residues Asn-106, Gln-113, and 130–132; that span reads VGN. The substrate site is built by Asn-132 and Arg-163. Residue His-188 is the Proton acceptor of the active site.

This sequence belongs to the LDH/MDH superfamily. MDH type 2 family.

The enzyme catalyses (S)-malate + NAD(+) = oxaloacetate + NADH + H(+). Catalyzes the reversible oxidation of malate to oxaloacetate. This chain is Malate dehydrogenase, found in Cupriavidus necator (strain ATCC 17699 / DSM 428 / KCTC 22496 / NCIMB 10442 / H16 / Stanier 337) (Ralstonia eutropha).